The primary structure comprises 422 residues: Testin (422 aa).

The PET domain occupies 92 to 199 (MILTNPVPAK…GDVKLPSEMD (108 aa)). Disordered stretches follow at residues 135–162 (QPVAGSEGAQYRKKQLAKQLPAHDQDPS) and 194–226 (LPSEMDVKPGDRSSLDGGDRGTTAEVGAVEDKS). Over residues 194–212 (LPSEMDVKPGDRSSLDGGD) the composition is skewed to basic and acidic residues. LIM zinc-binding domains are found at residues 234–297 (YSCY…CDSE), 299–359 (PRCA…NHAV), and 362–422 (QGCH…MMMS).

It belongs to the prickle / espinas / testin family. Interacts via LIM domain 1 with ZYX. Interacts (via LIM domain 3) with ENAH and VASP. Interacts with ALKBH4, talin, actin, alpha-actinin, GRIP1 and PXN. Interacts (via LIM domain 2) with ACTL7A (via N-terminus). Heterodimer with ACTL7A; the heterodimer interacts with ENAH to form a heterotrimer.

Its subcellular location is the cytoplasm. It localises to the cell junction. The protein localises to the focal adhesion. Its function is as follows. Scaffold protein that may play a role in cell adhesion, cell spreading and in the reorganization of the actin cytoskeleton. Plays a role in the regulation of cell proliferation. May act as a tumor suppressor. This chain is Testin (TES), found in Monodelphis domestica (Gray short-tailed opossum).